We begin with the raw amino-acid sequence, 152 residues long: Large-conductance mechanosensitive channel (152 aa).

3 helical membrane passes run 21–41, 44–64, and 92–112; these read IDLAVGVIIGAAFGKIVDSLV, VVMPLVNFILGGSVDFSNKFL, and GNFITIIINFVLLAFVIFWMV.

Belongs to the MscL family. In terms of assembly, homopentamer.

It is found in the cell inner membrane. In terms of biological role, channel that opens in response to stretch forces in the membrane lipid bilayer. May participate in the regulation of osmotic pressure changes within the cell. This Bordetella pertussis (strain Tohama I / ATCC BAA-589 / NCTC 13251) protein is Large-conductance mechanosensitive channel.